The chain runs to 548 residues: Thermosome subunit beta (548 aa).

It belongs to the TCP-1 chaperonin family. As to quaternary structure, forms a Heterooligomeric complex of two stacked eight-membered rings.

Its function is as follows. Molecular chaperone; binds unfolded polypeptides in vitro, and has a weak ATPase activity. The protein is Thermosome subunit beta (thsB) of Aeropyrum pernix (strain ATCC 700893 / DSM 11879 / JCM 9820 / NBRC 100138 / K1).